Consider the following 272-residue polypeptide: Large ribosomal subunit protein uL4 (272 aa).

This sequence belongs to the universal ribosomal protein uL4 family. In terms of assembly, part of the 50S ribosomal subunit.

Functionally, one of the primary rRNA binding proteins, this protein initially binds near the 5'-end of the 23S rRNA. It is important during the early stages of 50S assembly. It makes multiple contacts with different domains of the 23S rRNA in the assembled 50S subunit and ribosome. Forms part of the polypeptide exit tunnel. In Aeropyrum pernix (strain ATCC 700893 / DSM 11879 / JCM 9820 / NBRC 100138 / K1), this protein is Large ribosomal subunit protein uL4.